Consider the following 307-residue polypeptide: Coproporphyrin III ferrochelatase (307 aa).

Residues Tyr-12, Arg-29, 45-46, Ser-53, and Tyr-124 each bind Fe-coproporphyrin III; that span reads RY. Positions 181 and 263 each coordinate Fe(2+).

It belongs to the ferrochelatase family.

It localises to the cytoplasm. The enzyme catalyses Fe-coproporphyrin III + 2 H(+) = coproporphyrin III + Fe(2+). Its pathway is porphyrin-containing compound metabolism; protoheme biosynthesis. In terms of biological role, involved in coproporphyrin-dependent heme b biosynthesis. Catalyzes the insertion of ferrous iron into coproporphyrin III to form Fe-coproporphyrin III. The sequence is that of Coproporphyrin III ferrochelatase from Staphylococcus epidermidis (strain ATCC 35984 / DSM 28319 / BCRC 17069 / CCUG 31568 / BM 3577 / RP62A).